A 1407-amino-acid chain; its full sequence is Trichohyalin (1407 aa).

The S-100-like stretch occupies residues 1-91; that stretch reads MSPLLKSIID…AQAAYYALGQ (91 aa). 2 consecutive EF-hand domains span residues 23-48 and 49-84; these read CDGA…LQRP and HDPE…LAQA. Ca(2+)-binding residues include D32, D62, D64, D66, and E73. Disordered regions lie at residues 148-172, 218-237, 362-471, 486-587, 1014-1033, 1062-1082, and 1313-1407; these read EEEE…DKEQ, LREE…RALQ, REQA…EEEQ, EQLQ…ERER, REEE…EEER, KEEK…EEQQ, and EQFA…QYRP. Basic and acidic residues-rich tracts occupy residues 362-381, 396-424, 447-471, and 554-587; these read REQA…RQLE, RRQE…EQAR, SLRE…EEEQ, and QREK…ERER. The span at 1313-1376 shows a compositional bias: basic and acidic residues; it reads EQFAREEKSR…FREDQSRRQV (64 aa).

The protein belongs to the S100-fused protein family. Homodimer. Substrate of transglutaminase. Some 200 arginines are probably converted to citrullines by peptidylarginine deimidase. Found in the hard keratinizing tissues such as the inner root sheath (IRS) of hair follicles and medulla, and in the filiform papillae of dorsal tongue epithelium.

Functionally, intermediate filament-associated protein that associates in regular arrays with keratin intermediate filaments (KIF) of the inner root sheath cells of the hair follicle and the granular layer of the epidermis. It later becomes cross-linked to KIF by isodipeptide bonds. It may serve as scaffold protein, together with involucrin, in the organization of the cell envelope or even anchor the cell envelope to the KIF network. It may be involved in its own calcium-dependent postsynthetic processing during terminal differentiation. The sequence is that of Trichohyalin (TCHH) from Oryctolagus cuniculus (Rabbit).